We begin with the raw amino-acid sequence, 163 residues long: Nucleotide-binding protein MAP_4063c (163 aa).

The protein belongs to the YajQ family.

Its function is as follows. Nucleotide-binding protein. This chain is Nucleotide-binding protein MAP_4063c, found in Mycolicibacterium paratuberculosis (strain ATCC BAA-968 / K-10) (Mycobacterium paratuberculosis).